The following is a 141-amino-acid chain: ATP synthase epsilon chain (141 aa).

This sequence belongs to the ATPase epsilon chain family. In terms of assembly, F-type ATPases have 2 components, CF(1) - the catalytic core - and CF(0) - the membrane proton channel. CF(1) has five subunits: alpha(3), beta(3), gamma(1), delta(1), epsilon(1). CF(0) has three main subunits: a, b and c.

It localises to the cell membrane. In terms of biological role, produces ATP from ADP in the presence of a proton gradient across the membrane. The protein is ATP synthase epsilon chain of Mycoplasma mobile (strain ATCC 43663 / 163K / NCTC 11711) (Mesomycoplasma mobile).